The chain runs to 76 residues: cAMP-dependent protein kinase inhibitor alpha (76 aa).

Thr2 carries the blocked amino end (Thr) modification. The interval 49–76 is disordered; that stretch reads KAEGEGDAQRNPSEQTGEAQGEAAKQES.

This sequence belongs to the PKI family.

In terms of biological role, extremely potent competitive inhibitor of cAMP-dependent protein kinase activity, this protein interacts with the catalytic subunit of the enzyme after the cAMP-induced dissociation of its regulatory chains. This chain is cAMP-dependent protein kinase inhibitor alpha (PKIA), found in Gallus gallus (Chicken).